The primary structure comprises 231 residues: Orotidine 5'-phosphate decarboxylase (231 aa).

Substrate is bound by residues Asp-11, Lys-33, Asp-60–Thr-69, Thr-120, Arg-181, Gln-190, Gly-210, and Arg-211. Lys-62 acts as the Proton donor in catalysis.

This sequence belongs to the OMP decarboxylase family. Type 1 subfamily. In terms of assembly, homodimer.

It catalyses the reaction orotidine 5'-phosphate + H(+) = UMP + CO2. It participates in pyrimidine metabolism; UMP biosynthesis via de novo pathway; UMP from orotate: step 2/2. Functionally, catalyzes the decarboxylation of orotidine 5'-monophosphate (OMP) to uridine 5'-monophosphate (UMP). This chain is Orotidine 5'-phosphate decarboxylase, found in Shewanella oneidensis (strain ATCC 700550 / JCM 31522 / CIP 106686 / LMG 19005 / NCIMB 14063 / MR-1).